We begin with the raw amino-acid sequence, 226 residues long: Acyl-protein thioesterase 1 homolog 1 (226 aa).

Catalysis depends on charge relay system residues S121, D174, and H206.

It belongs to the AB hydrolase superfamily. AB hydrolase 2 family.

Its subcellular location is the cytoplasm. It is found in the nucleus. It carries out the reaction S-hexadecanoyl-L-cysteinyl-[protein] + H2O = L-cysteinyl-[protein] + hexadecanoate + H(+). Its function is as follows. Hydrolyzes fatty acids from S-acylated cysteine residues in proteins with a strong preference for palmitoylated G-alpha proteins over other acyl substrates. Mediates the deacylation of G-alpha proteins such as GPA1 in vivo, but has weak or no activity toward palmitoylated Ras proteins. Has weak lysophospholipase activity in vitro; however such activity may not exist in vivo. The sequence is that of Acyl-protein thioesterase 1 homolog 1 from Dictyostelium discoideum (Social amoeba).